A 70-amino-acid polypeptide reads, in one-letter code: Myotoxin (70 aa).

The N-terminal stretch at 1 to 22 is a signal peptide; the sequence is MKILYLLFAFLFLAFLSEPGNA. 3 cysteine pairs are disulfide-bonded: cysteine 26–cysteine 58, cysteine 33–cysteine 52, and cysteine 40–cysteine 59.

This sequence belongs to the crotamine-myotoxin family. Monomer. As to expression, expressed by the venom gland.

Its subcellular location is the secreted. Its function is as follows. Cationic peptide that possesses multiple functions. It acts as a cell-penetrating peptide (CPP), and as a potent voltage-gated potassium channel (Kv) inhibitor. It exhibits antimicrobial activities, hind limb paralysis, and severe muscle necrosis by a non-enzymatic mechanism. This chain is Myotoxin, found in Crotalus helleri (Southern pacific rattlesnake).